A 328-amino-acid chain; its full sequence is Purple acid phosphatase 7 (328 aa).

The signal sequence occupies residues 1–24; sequence MKMHVCFSVILMFLSIFFINGALS. D48 lines the Fe cation pocket. N-linked (GlcNAc...) asparagine glycosylation is present at N56. Fe cation is bound by residues D81 and Y84. Residue D81 participates in Zn(2+) binding. Zn(2+) is bound by residues N119 and H213. H222 functions as the Proton donor in the catalytic mechanism. H248 provides a ligand contact to Zn(2+). 248–250 provides a ligand contact to substrate; that stretch reads HDH. Residue H250 participates in Fe cation binding.

The protein belongs to the metallophosphoesterase superfamily. Purple acid phosphatase family. As to quaternary structure, homodimer. Fe cation is required as a cofactor. Zn(2+) serves as cofactor. In terms of tissue distribution, expressed in roots, stems, leaves, flowers and siliques.

It localises to the secreted. The catalysed reaction is a phosphate monoester + H2O = an alcohol + phosphate. The chain is Purple acid phosphatase 7 (PAP7) from Arabidopsis thaliana (Mouse-ear cress).